Reading from the N-terminus, the 359-residue chain is Nicotinate-nucleotide--dimethylbenzimidazole phosphoribosyltransferase (359 aa).

Glu318 functions as the Proton acceptor in the catalytic mechanism.

This sequence belongs to the CobT family. Homodimer.

It catalyses the reaction 5,6-dimethylbenzimidazole + nicotinate beta-D-ribonucleotide = alpha-ribazole 5'-phosphate + nicotinate + H(+). It functions in the pathway nucleoside biosynthesis; alpha-ribazole biosynthesis; alpha-ribazole from 5,6-dimethylbenzimidazole: step 1/2. Functionally, catalyzes the synthesis of alpha-ribazole-5'-phosphate from nicotinate mononucleotide (NAMN) and 5,6-dimethylbenzimidazole (DMB). This Escherichia coli O8 (strain IAI1) protein is Nicotinate-nucleotide--dimethylbenzimidazole phosphoribosyltransferase.